A 245-amino-acid chain; its full sequence is Phosducin (245 aa).

The segment covering 1-14 has biased composition (acidic residues); it reads MEEAKSQSLEEDFE. Residues 1 to 68 are disordered; sequence MEEAKSQSLE…RDNKDSKERF (68 aa). One can recognise a Phosducin domain in the interval 1–241; it reads MEEAKSQSLE…THALDQTNME (241 aa). Positions 59–68 are enriched in basic and acidic residues; the sequence is RDNKDSKERF. Ser-73 carries the phosphoserine; by PKA modification. A thioredoxin fold region spans residues 111–245; it reads YGFVYELETG…DQTNMEEDIE (135 aa).

This sequence belongs to the phosducin family. In terms of assembly, interacts with CRX. Forms a complex with the beta and gamma subunits of the GTP-binding protein, transducin. Post-translationally, light-induced changes in cyclic nucleotide levels modulate the phosphorylation of this protein by cAMP kinase.

The protein localises to the cytoplasm. Its subcellular location is the cytosol. It localises to the nucleus. The protein resides in the cell projection. It is found in the cilium. The protein localises to the photoreceptor outer segment. Its subcellular location is the photoreceptor inner segment. Its function is as follows. Inhibits the transcriptional activation activity of the cone-rod homeobox CRX. May participate in the regulation of visual phototransduction or in the integration of photoreceptor metabolism. The sequence is that of Phosducin (PDC) from Felis catus (Cat).